The chain runs to 469 residues: Probable acetate kinase (469 aa).

Asn-30 contributes to the Mg(2+) binding site. Lys-37 lines the ATP pocket. Residue Arg-122 coordinates substrate. The active-site Proton donor/acceptor is the Asp-179. 239–243 contributes to the ATP binding site; it reads HLGSG. A Mg(2+)-binding site is contributed by Glu-453.

The protein belongs to the acetokinase family. Requires Mg(2+) as cofactor.

It catalyses the reaction acetate + ATP = acetyl phosphate + ADP. Its pathway is metabolic intermediate biosynthesis; acetyl-CoA biosynthesis; acetyl-CoA from acetate: step 1/2. This chain is Probable acetate kinase, found in Neurospora crassa (strain ATCC 24698 / 74-OR23-1A / CBS 708.71 / DSM 1257 / FGSC 987).